The primary structure comprises 49 residues: Astexin-3 (49 aa).

Positions 1–25 (MRTYNRSLPARAGLTDLGKVTTHTK) are excised as a propeptide. Residues 26 to 34 (GPTPMVGLD) constitute a cross-link (isoaspartyl glycine isopeptide (Gly-Asp)).

In terms of processing, this lasso peptide is hydrolyzed to a linear form by the isopeptidase AtxE2, in vitro. The isopeptidase AtxE2 only recognizes the threaded form (but not the unthreaded form).

Its subcellular location is the cytoplasm. The protein localises to the secreted. Shows weak antimicrobial activity against its phylogenetic relative Caulobacter crescentus. Does not show activity against other bacteria tested (E.coli, Vibrio sp, Burkhoderia thailandensis, and Salmonella newport). This Asticcacaulis excentricus (strain ATCC 15261 / DSM 4724 / KCTC 12464 / NCIMB 9791 / VKM B-1370 / CB 48) protein is Astexin-3.